The primary structure comprises 175 residues: Orotate phosphoribosyltransferase (175 aa).

Residues Arg-88, Lys-89, Lys-92, and 114 to 122 each bind 5-phospho-alpha-D-ribose 1-diphosphate; that span reads EDVVTTARG. Residues Thr-118 and Arg-146 each coordinate orotate.

Belongs to the purine/pyrimidine phosphoribosyltransferase family. PyrE subfamily. In terms of assembly, homodimer. Requires Mg(2+) as cofactor.

It carries out the reaction orotidine 5'-phosphate + diphosphate = orotate + 5-phospho-alpha-D-ribose 1-diphosphate. Its pathway is pyrimidine metabolism; UMP biosynthesis via de novo pathway; UMP from orotate: step 1/2. In terms of biological role, catalyzes the transfer of a ribosyl phosphate group from 5-phosphoribose 1-diphosphate to orotate, leading to the formation of orotidine monophosphate (OMP). This Methanocella arvoryzae (strain DSM 22066 / NBRC 105507 / MRE50) protein is Orotate phosphoribosyltransferase.